The following is a 466-amino-acid chain: Putative D-3-phosphoglycerate dehydrogenase (466 aa).

The segment covering 1 to 15 has biased composition (basic and acidic residues); it reads MDIKGGRRGNVEDSL. The tract at residues 1 to 26 is disordered; it reads MDIKGGRRGNVEDSLNKLSLSPPDNN. A compositionally biased stretch (polar residues) spans 16–26; the sequence is NKLSLSPPDNN. Ser87 carries the post-translational modification Phosphoserine. Residues 205-206 and Asp225 each bind NAD(+); that span reads HI. Ser258 carries the post-translational modification Phosphoserine. Residues 282–284 and Asp308 each bind NAD(+); that span reads ASR. Residue Arg284 is part of the active site. Residue Glu313 is part of the active site. His344 acts as the Proton donor in catalysis. 344-347 contacts NAD(+); that stretch reads HIGG. The 71-residue stretch at 396–466 folds into the ACT domain; the sequence is RVLFVHRNVP…PCKINTRLLY (71 aa).

It belongs to the D-isomer specific 2-hydroxyacid dehydrogenase family.

It carries out the reaction (2R)-3-phosphoglycerate + NAD(+) = 3-phosphooxypyruvate + NADH + H(+). The catalysed reaction is (R)-2-hydroxyglutarate + NAD(+) = 2-oxoglutarate + NADH + H(+). It functions in the pathway amino-acid biosynthesis; L-serine biosynthesis; L-serine from 3-phospho-D-glycerate: step 1/3. Catalyzes the reversible oxidation of 3-phospho-D-glycerate to 3-phosphonooxypyruvate, the first step of the phosphorylated L-serine biosynthesis pathway. Also catalyzes the reversible oxidation of 2-hydroxyglutarate to 2-oxoglutarate. The chain is Putative D-3-phosphoglycerate dehydrogenase from Schizosaccharomyces pombe (strain 972 / ATCC 24843) (Fission yeast).